Consider the following 377-residue polypeptide: E3 ubiquitin-protein ligase rififylin (377 aa).

The segment at 55–107 (TGSEPSCKACGVHFASTTRKQTCLDCKKNFCMTCSSQEGNGPRLCLLCLRFRA) adopts an FYVE-type zinc-finger fold. One can recognise an SAP 1 domain in the interval 115 to 134 (LMKMKVKDLRDYLSLHDIST). The segment at 176–249 (LTQPQTSTVP…SVDSEDSFVP (74 aa)) is disordered. The segment covering 190–212 (GLPSSPAQVTSVPLAQDQETQQA) has biased composition (polar residues). The segment covering 235-245 (EDETQSVDSED) has biased composition (acidic residues). Residues Ser240, Ser243, Ser246, and Ser254 each carry the phosphoserine modification. Residues 264-278 (IEGLTVRQLKEILAR) form the SAP 2 domain. The RING-type zinc-finger motif lies at 330-365 (CKICMDSPIDCVLLECGHMVTCTKCGKRMNECPICR).

As to quaternary structure, interacts with CASP8 and CASP10. Interacts with RIPK1 (via protein kinase domain); involved in RIPK1 ubiquitination. Interacts with PRR5L. Interacts (via RING-type zinc finger) with p53/TP53; involved in p53/TP53 ubiquitination. Interacts (via RING-type zinc finger) with MDM2; the interaction stabilizes MDM2. In terms of processing, autoubiquitinated. Palmitoylated. Post-translationally, undergoes caspase-mediated cleavage upon death-receptor activation, by TNFSF10 for instance. May be mediated by the caspases CASP8 and CASP10 in a negative feedback loop. As to expression, ubiquitous. Detected in heart, brain, spleen, lung, liver, skeletal muscle, kidney, testis, thymus, whole embryo and embryonic stem cells.

The protein resides in the cytoplasm. The protein localises to the cytosol. Its subcellular location is the cell membrane. It is found in the recycling endosome membrane. It carries out the reaction S-ubiquitinyl-[E2 ubiquitin-conjugating enzyme]-L-cysteine + [acceptor protein]-L-lysine = [E2 ubiquitin-conjugating enzyme]-L-cysteine + N(6)-ubiquitinyl-[acceptor protein]-L-lysine.. Its pathway is protein modification; protein ubiquitination. In terms of biological role, E3 ubiquitin-protein ligase that regulates several biological processes through the ubiquitin-mediated proteasomal degradation of various target proteins. Mediates 'Lys-48'-linked polyubiquitination of PRR5L and its subsequent proteasomal degradation thereby indirectly regulating cell migration through the mTORC2 complex. Also ubiquitinates the caspases CASP8 and CASP10, promoting their proteasomal degradation, to negatively regulate apoptosis downstream of death domain receptors. Also negatively regulates the tumor necrosis factor-mediated signaling pathway through targeting of RIPK1 to ubiquitin-mediated proteasomal degradation. Negatively regulates p53/TP53 through its direct ubiquitination and targeting to proteasomal degradation. Indirectly, may also negatively regulate p53/TP53 through ubiquitination and degradation of SFN. May also play a role in endocytic recycling. This is E3 ubiquitin-protein ligase rififylin from Mus musculus (Mouse).